Consider the following 1551-residue polypeptide: Serine/threonine-protein kinase MRCK gamma (1551 aa).

The region spanning 71–337 (FEILKVIGRG…LDDFRKHPFF (267 aa)) is the Protein kinase domain. ATP-binding positions include 77–85 (IGRGAFGEV) and lysine 100. The active-site Proton acceptor is aspartate 195. Serine 216 and serine 228 each carry phosphoserine; by autocatalysis. Residue threonine 234 is modified to Phosphothreonine; by autocatalysis. Residues 338-408 (EGVDWERLAT…TSGSPFDVQS (71 aa)) form the AGC-kinase C-terminal domain. 2 coiled-coil regions span residues 442–675 (QPQE…TESN) and 729–801 (KARR…QARG). A disordered region spans residues 578-605 (QESSQAKTVHAAPETNGIGSPEGQSQEA). Residues 820 to 886 (TEKDSAKDPG…SHTLRPRSFP (67 aa)) are disordered. Residues 839-849 (AEAELRPEGRR) show a composition bias toward basic and acidic residues. A Phorbol-ester/DAG-type zinc finger spans residues 877 to 926 (SHTLRPRSFPSPTKCLRCTSLMLGLGRQGLGCDTCGYFCHSACASQAPPC). The PH domain occupies 946–1065 (GTAYEGFLSV…WLQVLGELQR (120 aa)). The 275-residue stretch at 1091–1365 (LPHALCAAVI…RPLNPEGSLF (275 aa)) folds into the CNH domain. Positions 1436 to 1449 (ISPPTNFNHLVHVG) constitute a CRIB domain. The segment at 1441 to 1551 (NFNHLVHVGP…PPDPESESSP (111 aa)) is disordered. The segment covering 1455–1468 (PNTRDGTRAQEQKS) has biased composition (basic and acidic residues). At serine 1481 the chain carries Phosphoserine. Polar residues predominate over residues 1511–1527 (TSLSSESVSCPQGSLSP).

It belongs to the protein kinase superfamily. AGC Ser/Thr protein kinase family. DMPK subfamily. As to quaternary structure, homodimer and homotetramer via the coiled coil regions. Interacts tightly with GTP-bound but not GDP-bound CDC42. It depends on Mg(2+) as a cofactor.

The protein localises to the cytoplasm. It carries out the reaction L-seryl-[protein] + ATP = O-phospho-L-seryl-[protein] + ADP + H(+). The enzyme catalyses L-threonyl-[protein] + ATP = O-phospho-L-threonyl-[protein] + ADP + H(+). Its activity is regulated as follows. Maintained in an inactive, closed conformation by an interaction between the kinase domain and the negative autoregulatory C-terminal coiled-coil region. Agonist binding to the phorbol ester binding site disrupts this, releasing the kinase domain to allow N-terminus-mediated dimerization and kinase activation by transautophosphorylation. May act as a downstream effector of CDC42 in cytoskeletal reorganization. Contributes to the actomyosin contractility required for cell invasion, through the regulation of MYPT1 and thus MLC2 phosphorylation. This chain is Serine/threonine-protein kinase MRCK gamma, found in Mus musculus (Mouse).